Reading from the N-terminus, the 498-residue chain is Lycopene beta cyclase, chloroplastic/chromoplastic (498 aa).

A chloroplast and chromoplast-targeting transit peptide spans 1 to 79 (MDTLLRTPNN…ELPMYDPSKG (79 aa)). Residue 84–112 (LAVVGGGPAGLAVAQQVSEAGLSVCSIDP) coordinates NAD(+). Residues 293-297 (FLEET) carry the FLEET motif motif.

The protein belongs to the lycopene cyclase family. In terms of assembly, monomer. The cofactor is FAD. It depends on NADPH as a cofactor.

The protein localises to the plastid. The protein resides in the chloroplast. Its subcellular location is the chromoplast. The catalysed reaction is a carotenoid psi-end group = a carotenoid beta-end derivative. It catalyses the reaction all-trans-lycopene = gamma-carotene. It carries out the reaction gamma-carotene = all-trans-beta-carotene. The enzyme catalyses all-trans-neurosporene = beta-zeacarotene. The catalysed reaction is beta-zeacarotene = 7,8-dihydro-beta-carotene. It participates in carotenoid biosynthesis; beta-carotene biosynthesis. It functions in the pathway carotenoid biosynthesis; beta-zeacarotene biosynthesis. Its function is as follows. Catalyzes the double cyclization reaction which converts lycopene to beta-carotene. Catalyzes the double cyclization reaction which converts neurosporene to 7,8-dihydro-beta-carotene. The polypeptide is Lycopene beta cyclase, chloroplastic/chromoplastic (Capsicum annuum (Capsicum pepper)).